We begin with the raw amino-acid sequence, 2227 residues long: Genome polyprotein (2227 aa).

2 short sequence motifs ((L)YPX(n)L motif) span residues 167–171 and 200–205; these read YPHGL and YPVWEL. An involved in P1-2A pentamerization region spans residues 766-836; the sequence is MMSRIAAGDL…PRKKKGLFSQ (71 aa). Residues 1010–1030 traverse the membrane as a helical segment; sequence VTVEIINTVLCFVKSGILLYV. The interval 1043 to 1070 is membrane-penetrating ability; that stretch reads IGLLRVMNYVDIGCSVISCGKVFSKMLE. A coiled-coil region spans residues 1127 to 1152; that stretch reads KKKDILNILKDNQQKIEKAIEEADKF. In terms of domain architecture, SF3 helicase spans 1204–1366; that stretch reads HQKLKNLGSI…SFSKNPHNDM (163 aa). 1230-1237 is a binding site for ATP; that stretch reads GKRGGGKS. Residues 1462–1482 traverse the membrane as a helical segment; it reads WVAVGAAVGILGVLVGGWFVY. Y1499 bears the O-(5'-phospho-RNA)-tyrosine mark. Residues 1514–1728 enclose the Peptidase C3 domain; the sequence is DPVESQSTLE…VAKLVTQEMF (215 aa). Active-site for protease 3C activity residues include H1563, D1603, and C1691. Positions 1976 to 2097 constitute a RdRp catalytic domain; that stretch reads DVGLDLDFSA…VFSRDVQIDN (122 aa).

The protein belongs to the picornaviridae polyprotein family. In terms of assembly, homodimer. Homomultimer; probably interacts with membranes in a multimeric form. Seems to assemble into amyloid-like fibers. Homodimer. Monomer. Interacts with protein 3CD. As to quaternary structure, interacts with host ACBD3. In terms of assembly, interacts with protein 3AB. Interacts with human MAVS. As to quaternary structure, homodimer; disulfide-linked. In terms of assembly, homopentamer. Homooligomer. Interacts with capsid protein VP2. Interacts with capsid protein VP3. As to quaternary structure, interacts with capsid protein VP1. Interacts with capsid protein VP3. In terms of assembly, interacts with capsid protein VP1. Interacts with capsid protein VP2. In terms of processing, specific enzymatic cleavages by viral protease in vivo yield a variety of precursors and mature proteins. Polyprotein processing intermediates are produced, such as P1-2A which is a functional precursor of the structural proteins, VP0 which is a VP4-VP2 precursor, VP1-2A precursor, 3ABC precursor which is a stable and catalytically active precursor of 3A, 3B and 3C proteins, 3AB and 3CD precursors. The assembly signal 2A is removed from VP1-2A by a host protease, possibly host Cathepsin L. This cleavage occurs over a region of 3 amino-acids probably generating VP1 proteins with heterogeneous C-termini. Post-translationally, during virion maturation, immature virions are rendered infectious following cleavage of VP0 into VP4 and VP2. This maturation seems to be an autocatalytic event triggered by the presence of RNA in the capsid and is followed by a conformational change of the particle. The assembly signal 2A is removed from VP1-2A by a host protease, possibly host Cathepsin L in naked virions. This cleavage does not occur in enveloped virions. This cleavage occurs over a region of 3 amino-acids probably generating VP1 proteins with heterogeneous C-termini. In terms of processing, VPg is uridylylated prior to priming replication into VPg-pUpU. Post-translationally, unlike other picornaviruses, does not seem to be myristoylated.

It is found in the virion. The protein localises to the host endosome. The protein resides in the host multivesicular body. Its subcellular location is the host membrane. It localises to the host mitochondrion outer membrane. It is found in the host cytoplasm. The protein localises to the host cytoplasmic vesicle membrane. It carries out the reaction RNA(n) + a ribonucleoside 5'-triphosphate = RNA(n+1) + diphosphate. It catalyses the reaction a ribonucleoside 5'-triphosphate + H2O = a ribonucleoside 5'-diphosphate + phosphate + H(+). The catalysed reaction is Selective cleavage of Gln-|-Gly bond in the poliovirus polyprotein. In other picornavirus reactions Glu may be substituted for Gln, and Ser or Thr for Gly.. Functionally, capsid proteins VP1, VP2, and VP3 form a closed capsid enclosing the viral positive strand RNA genome. All these proteins contain a beta-sheet structure called beta-barrel jelly roll. Together they form an icosahedral capsid (T=3) composed of 60 copies of each VP1, VP2, and VP3, with a diameter of approximately 300 Angstroms. VP1 is situated at the 12 fivefold axes, whereas VP2 and VP3 are located at the quasi-sixfold axes. The naked capsid interacts with the host receptor HAVCR1 to provide virion attachment to and probably entry into the target cell. VP0 precursor is a component of the immature procapsids. Its function is as follows. Plays a role in the assembly of the 12 pentamers into an icosahedral structure. Has not been detected in mature virions, supposedly owing to its small size. In terms of biological role, precursor component of immature procapsids that corresponds to an extended form of the structural protein VP1. After maturation, possibly by the host Cathepsin L, the assembly signal 2A is cleaved to give rise to the mature VP1 protein. Functionally, functions as a viroporin. Affects membrane integrity and causes an increase in membrane permeability. Involved in host intracellular membrane rearrangements probably to give rise to the viral factories. Does not disrupt calcium homeostasis or glycoprotein trafficking. Antagonizes the innate immune response of the host by suppressing IFN-beta synthesis, which it achieves by interfering with the RIG-I/IFIH1 pathway. Affects membrane integrity and causes an increase in membrane permeability. Its function is as follows. Associates with and induces structural rearrangements of intracellular membranes. Displays RNA-binding activity. In terms of biological role, the precursor 3ABC is targeted to the mitochondrial membrane where protease 3C activity cleaves and inhibits the host antiviral protein MAVS, thereby disrupting activation of IRF3 through the IFIH1/MDA5 pathway. In vivo, the protease activity of 3ABC precursor is more efficient in cleaving the 2BC precursor than that of protein 3C. The 3ABC precursor may therefore play a role in the proteolytic processing of the polyprotein. Possible viroporin. Functionally, interacts with the 3CD precursor and with RNA structures found at both the 5'- and 3'-termini of the viral genome. Since the 3AB precursor contains the hydrophobic domain 3A, it probably anchors the whole viral replicase complex to intracellular membranes on which viral RNA synthesis occurs. May serve as membrane anchor to the 3AB and 3ABC precursors via its hydrophobic domain. May interact with RNA. Its function is as follows. Acts as a primer for viral RNA replication and remains covalently bound to viral genomic RNA. VPg is uridylylated prior to priming replication into VPg-pUpU. The VPg-pUpU is then used as primer on the genomic RNA poly(A) by the RNA-dependent RNA polymerase to replicate the viral genome. In terms of biological role, cysteine protease that generates mature viral proteins from the precursor polyprotein. In addition to its proteolytic activity, it binds to viral RNA, and thus influences viral genome replication. RNA and substrate bind cooperatively to the protease. Cleaves IKBKG/NEMO to impair innate immune signaling. Cleaves host PABPC1 which may participate in the switch of viral translation to RNA synthesis. Functionally, interacts with the 3AB precursor and with RNA structures found at both the 5'- and 3'-termini of the viral genome. Disrupts TLR3 signaling by degrading the host adapter protein TICAM1/TRIF. Replicates genomic and antigenomic RNA by recognizing replications specific signals. This chain is Genome polyprotein, found in Cercopithecus hamlyni (Owl-faced monkey).